A 612-amino-acid chain; its full sequence is Dihydroxy-acid dehydratase (612 aa).

Asp81 serves as a coordination point for Mg(2+). Cys122 contacts [2Fe-2S] cluster. Mg(2+)-binding residues include Asp123 and Lys124. Lys124 bears the N6-carboxylysine mark. Cys196 lines the [2Fe-2S] cluster pocket. Position 492 (Glu492) interacts with Mg(2+). Ser518 functions as the Proton acceptor in the catalytic mechanism.

It belongs to the IlvD/Edd family. In terms of assembly, homodimer. Requires [2Fe-2S] cluster as cofactor. Mg(2+) is required as a cofactor.

The catalysed reaction is (2R)-2,3-dihydroxy-3-methylbutanoate = 3-methyl-2-oxobutanoate + H2O. It carries out the reaction (2R,3R)-2,3-dihydroxy-3-methylpentanoate = (S)-3-methyl-2-oxopentanoate + H2O. It functions in the pathway amino-acid biosynthesis; L-isoleucine biosynthesis; L-isoleucine from 2-oxobutanoate: step 3/4. The protein operates within amino-acid biosynthesis; L-valine biosynthesis; L-valine from pyruvate: step 3/4. Functionally, functions in the biosynthesis of branched-chain amino acids. Catalyzes the dehydration of (2R,3R)-2,3-dihydroxy-3-methylpentanoate (2,3-dihydroxy-3-methylvalerate) into 2-oxo-3-methylpentanoate (2-oxo-3-methylvalerate) and of (2R)-2,3-dihydroxy-3-methylbutanoate (2,3-dihydroxyisovalerate) into 2-oxo-3-methylbutanoate (2-oxoisovalerate), the penultimate precursor to L-isoleucine and L-valine, respectively. This chain is Dihydroxy-acid dehydratase, found in Paracoccus denitrificans (strain Pd 1222).